The chain runs to 1802 residues: Non-reducing polyketide synthase nscA (1802 aa).

Residues 27 to 261 form an N-terminal acylcarrier protein transacylase domain (SAT) region; sequence DLFRRLDQHS…PLPVYDGLCH (235 aa). Positions 396–829 constitute a Ketosynthase family 3 (KS3) domain; it reads SSKLAIVGMA…GGNTTLLLED (434 aa). Active-site for beta-ketoacyl synthase activity residues include cysteine 569, histidine 704, and histidine 747. Residues 935 to 1235 form a malonyl-CoA:ACP transacylase (MAT) domain region; that stretch reads FTGQGAYYHG…SASAIPSCRR (301 aa). The interval 1322–1641 is product template (PT) domain; the sequence is TSLVHQITAE…RLLMDRFFSP (320 aa). The interval 1326–1462 is N-terminal hotdog fold; it reads HQITAETVEA…ATIRFEDPEA (137 aa). The PKS/mFAS DH domain occupies 1326–1636; it reads HQITAETVEA…FRRVPRLLMD (311 aa). Histidine 1358 serves as the catalytic Proton acceptor; for dehydratase activity. The interval 1490-1636 is C-terminal hotdog fold; it reads ASRLSKPLAY…FRRVPRLLMD (147 aa). Aspartate 1547 serves as the catalytic Proton donor; for dehydratase activity. The segment at 1699-1729 is disordered; that stretch reads LLATSSKSSTPKESPIVTPAESERAEPVDNS. The segment covering 1702 to 1713 has biased composition (low complexity); that stretch reads TSSKSSTPKESP. A Carrier domain is found at 1725–1802; that stretch reads PVDNSMTSQC…EMTAWIEEYC (78 aa). Position 1762 is an O-(pantetheine 4'-phosphoryl)serine (serine 1762).

It depends on pantetheine 4'-phosphate as a cofactor.

It functions in the pathway secondary metabolite biosynthesis. Its function is as follows. Non-reducing polyketide synthase; part of the gene cluster that mediates the biosynthesis of neosartoricin B, a prenylated anthracenone that probably exhibits T-cell antiproliferative activity, suggestive of a physiological role as an immunosuppressive agent. The non-reducing polyketide synthase nscA probably synthesizes and cyclizes the decaketide backbone. The hydrolase nscB then mediates the product release through hydrolysis followed by spontaneous decarboxylation. The prenyltransferase nscD catalyzes the addition of the dimethylallyl group to the aromatic C5. The FAD-dependent monooxygenase nscC is then responsible for the stereospecific hydroxylation at C2. Neosartoricin B can be converted into two additional compounds neosartoricins C and D. Neosartoricin C is a spirocyclic compound that is cyclized through the attack of C3 hydroxyl on C14, followed by dehydration. On the other hand, neosartoricin D is a further cyclized compound in which attack of C2 on C14 in neosartoricin C results in the formation of the acetal-containing dioxabicyclo-octanone ring. Both of these compounds are novel and possibly represent related metabolites of the gene cluster. The chain is Non-reducing polyketide synthase nscA from Trichophyton tonsurans (strain CBS 112818) (Scalp ringworm fungus).